The sequence spans 450 residues: MKDSYFDLNTFWKGIQGRFAANMGETAYENWIKPVRAVKVDLANRTVELQAPNDIVMQAWDNGNYTAKFMEYAYDVAHDFFKPELKVIKVVANPVNNQKSNQSNSDFVATDYQLNQNFTFDTWVIGDANELATSAAMAVSEQPGRQYNPLLIYGSSGLGKTHLMEAIGNRLKELQPDAIVRYITTDDFMNDWVNAISKKTTADFTSTYENVDLLLVDDIQMLQGKDRFQEEFFNIFNKITKSQKQIVMTSDVLPKDIPGLNARLVSRFMQGVAYDIQKPDFPTRLAILKNKSEEVGISIDNQTLTLIAEQIDTNVRELEGAFNTLTLMARAGRPINVSNAQKILEHLNITRQKVITLPDIQKTVADDYNVSINDLIGKKRNSDIVLPRQVAMYLIRTLTDTSLPKIGQAFGGRDHTTVMHGTEKIADLIETDYALKQRIENLSTKIKEKS.

Positions 1-79 (MKDSYFDLNT…MEYAYDVAHD (79 aa)) are domain I, interacts with DnaA modulators. Residues 79–112 (DFFKPELKVIKVVANPVNNQKSNQSNSDFVATDY) form a domain II region. The domain III, AAA+ region stretch occupies residues 113-329 (QLNQNFTFDT…GAFNTLTLMA (217 aa)). Gly157, Gly159, Lys160, and Thr161 together coordinate ATP. A domain IV, binds dsDNA region spans residues 330-450 (RAGRPINVSN…NLSTKIKEKS (121 aa)).

It belongs to the DnaA family. Oligomerizes as a right-handed, spiral filament on DNA at oriC.

It is found in the cytoplasm. Its function is as follows. Plays an essential role in the initiation and regulation of chromosomal replication. ATP-DnaA binds to the origin of replication (oriC) to initiate formation of the DNA replication initiation complex once per cell cycle. Binds the DnaA box (a 9 base pair repeat at the origin) and separates the double-stranded (ds)DNA. Forms a right-handed helical filament on oriC DNA; dsDNA binds to the exterior of the filament while single-stranded (ss)DNA is stabiized in the filament's interior. The ATP-DnaA-oriC complex binds and stabilizes one strand of the AT-rich DNA unwinding element (DUE), permitting loading of DNA polymerase. After initiation quickly degrades to an ADP-DnaA complex that is not apt for DNA replication. Binds acidic phospholipids. This Oenococcus oeni (strain ATCC BAA-331 / PSU-1) protein is Chromosomal replication initiator protein DnaA.